Here is a 130-residue protein sequence, read N- to C-terminus: Insulin-like growth factor 1 (130 aa).

The signal sequence occupies residues 1–25 (MHAVSSSHLFYLAFCLLVLTSSATA). Positions 26-54 (GPETLCGAELVDALQFVCGDRGFYFNKPT) are b. 3 disulfides stabilise this stretch: C31/C73, C43/C86, and C72/C77. Positions 55–66 (GYGSSSRRAPQT) are c. The a stretch occupies residues 67 to 87 (GIVDECCFRSCDLRRLEMYCA). Residues 88–95 (PLKPAKSA) are d. Positions 96–130 (RSVRAQRHTDMPKTQKEVHLKNASRGSAGNKNYRM) are cleaved as a propeptide — e peptide. The tract at residues 97 to 130 (SVRAQRHTDMPKTQKEVHLKNASRGSAGNKNYRM) is disordered. Residues 102–115 (RHTDMPKTQKEVHL) are compositionally biased toward basic and acidic residues. Residues 119-130 (SRGSAGNKNYRM) show a composition bias toward polar residues.

It belongs to the insulin family. In terms of assembly, forms a ternary complex with IGFR1 and ITGAV:ITGB3. Forms a ternary complex with IGFR1 and ITGA6:ITGB4. Forms a ternary complex with IGFBP3 and ALS.

It localises to the secreted. The insulin-like growth factors, isolated from plasma, are structurally and functionally related to insulin but have a much higher growth-promoting activity. May be a physiological regulator of [1-14C]-2-deoxy-D-glucose (2DG) transport and glycogen synthesis in osteoblasts. Stimulates glucose transport in bone-derived osteoblastic (PyMS) cells and is effective at much lower concentrations than insulin, not only regarding glycogen and DNA synthesis but also with regard to enhancing glucose uptake. May play a role in synapse maturation. Ca(2+)-dependent exocytosis of IGF1 is required for sensory perception of smell in the olfactory bulb. Acts as a ligand for IGF1R. Binds to the alpha subunit of IGF1R, leading to the activation of the intrinsic tyrosine kinase activity which autophosphorylates tyrosine residues in the beta subunit thus initiating a cascade of down-stream signaling events leading to activation of the PI3K-AKT/PKB and the Ras-MAPK pathways. Binds to integrins ITGAV:ITGB3 and ITGA6:ITGB4. Its binding to integrins and subsequent ternary complex formation with integrins and IGFR1 are essential for IGF1 signaling. Induces the phosphorylation and activation of IGFR1, MAPK3/ERK1, MAPK1/ERK2 and AKT1. As part of the MAPK/ERK signaling pathway, acts as a negative regulator of apoptosis in cardiomyocytes via promotion of STUB1/CHIP-mediated ubiquitination and degradation of ICER-type isoforms of CREM. The polypeptide is Insulin-like growth factor 1 (Cavia porcellus (Guinea pig)).